A 101-amino-acid chain; its full sequence is Urease subunit beta (101 aa).

It belongs to the urease beta subunit family. Heterotrimer of UreA (gamma), UreB (beta) and UreC (alpha) subunits. Three heterotrimers associate to form the active enzyme.

It localises to the cytoplasm. The catalysed reaction is urea + 2 H2O + H(+) = hydrogencarbonate + 2 NH4(+). The protein operates within nitrogen metabolism; urea degradation; CO(2) and NH(3) from urea (urease route): step 1/1. This Allorhizobium ampelinum (strain ATCC BAA-846 / DSM 112012 / S4) (Agrobacterium vitis (strain S4)) protein is Urease subunit beta.